Consider the following 709-residue polypeptide: Myotubularin-related protein 11 (709 aa).

The segment at 1 to 39 is disordered; that stretch reads MWWGGRGQSFNIAPQKEEPEMGSVQENRMPEPRSRQPSS. One can recognise a Myotubularin phosphatase domain in the interval 196–639; it reads METAEDWETE…PQIRLWRRCY (444 aa).

Belongs to the protein-tyrosine phosphatase family. Non-receptor class myotubularin subfamily. Expressed in bone marrow, spleen and thymus.

The chain is Myotubularin-related protein 11 (MTMR11) from Homo sapiens (Human).